A 293-amino-acid polypeptide reads, in one-letter code: Ribosomal protein L11 methyltransferase (293 aa).

S-adenosyl-L-methionine contacts are provided by Thr145, Gly166, Asp188, and Asn230.

It belongs to the methyltransferase superfamily. PrmA family.

It localises to the cytoplasm. It catalyses the reaction L-lysyl-[protein] + 3 S-adenosyl-L-methionine = N(6),N(6),N(6)-trimethyl-L-lysyl-[protein] + 3 S-adenosyl-L-homocysteine + 3 H(+). Its function is as follows. Methylates ribosomal protein L11. This Shewanella frigidimarina (strain NCIMB 400) protein is Ribosomal protein L11 methyltransferase.